The chain runs to 598 residues: Kinetochore-associated protein KNL-2 homolog (598 aa).

Residues Val-19–Arg-111 form the SANTA domain. Composition is skewed to basic and acidic residues over residues Ala-335–Gly-344 and Lys-371–Ala-381. Disordered stretches follow at residues Ala-335–Lys-403, Lys-445–Glu-500, Pro-520–Ser-542, and Lys-572–Lys-598. Residues Lys-383–Ala-392 are compositionally biased toward polar residues. Positions Gln-527 to Gln-539 are enriched in polar residues. The tract at residues Gly-538–Lys-572 is required for localization at centromeres.

This sequence belongs to the KNL2 family. As to expression, expressed in shoot apical meristem, leaf primordia, basal parts of emerging leaves, inflorescence meristems, young inflorescences, developing flower buds, developing sepals and pistils, styles and young siliques.

It is found in the nucleus. The protein resides in the nucleoplasm. It localises to the nuclear body. Its subcellular location is the nucleolus. The protein localises to the chromosome. It is found in the centromere. In terms of biological role, involved in recognition of centromeres and centromeric localization of the centromere-specific histone CENH3. Required for normal progression of mitosis and meiosis. May play a role in the determination of the epigenetic status of centromeres. Binds DNA and RNA in vitro. This Arabidopsis thaliana (Mouse-ear cress) protein is Kinetochore-associated protein KNL-2 homolog.